The chain runs to 753 residues: 5-methyltetrahydropteroyltriglutamate--homocysteine methyltransferase (753 aa).

5-methyltetrahydropteroyltri-L-glutamate-binding positions include 17-20 (RELK) and lysine 117. L-homocysteine-binding positions include 431 to 433 (IGS) and glutamate 484. Residues 431 to 433 (IGS) and glutamate 484 contribute to the L-methionine site. Residues 515–516 (RC) and tryptophan 561 each bind 5-methyltetrahydropteroyltri-L-glutamate. Aspartate 599 is an L-homocysteine binding site. Aspartate 599 provides a ligand contact to L-methionine. Residue glutamate 605 participates in 5-methyltetrahydropteroyltri-L-glutamate binding. Zn(2+)-binding residues include histidine 641, cysteine 643, and glutamate 665. Histidine 694 functions as the Proton donor in the catalytic mechanism. Cysteine 726 provides a ligand contact to Zn(2+).

This sequence belongs to the vitamin-B12 independent methionine synthase family. Requires Zn(2+) as cofactor.

The enzyme catalyses 5-methyltetrahydropteroyltri-L-glutamate + L-homocysteine = tetrahydropteroyltri-L-glutamate + L-methionine. The protein operates within amino-acid biosynthesis; L-methionine biosynthesis via de novo pathway; L-methionine from L-homocysteine (MetE route): step 1/1. Functionally, catalyzes the transfer of a methyl group from 5-methyltetrahydrofolate to homocysteine resulting in methionine formation. This is 5-methyltetrahydropteroyltriglutamate--homocysteine methyltransferase from Shigella flexneri.